Reading from the N-terminus, the 185-residue chain is Small ribosomal subunit protein uS4c (185 aa).

The S4 RNA-binding domain maps to 72–134 (MRLDNVIFRL…PTSCNALKGE (63 aa)). The tract at residues 132-154 (KGESPGGGETPDHLTASLSEGSR) is disordered.

The protein belongs to the universal ribosomal protein uS4 family. As to quaternary structure, part of the 30S ribosomal subunit. Contacts protein S5. The interaction surface between S4 and S5 is involved in control of translational fidelity.

The protein resides in the plastid. The protein localises to the chloroplast. One of the primary rRNA binding proteins, it binds directly to 16S rRNA where it nucleates assembly of the body of the 30S subunit. Its function is as follows. With S5 and S12 plays an important role in translational accuracy. The chain is Small ribosomal subunit protein uS4c (rps4) from Woodwardia radicans (Rooting chainfern).